Reading from the N-terminus, the 111-residue chain is SPbeta prophage-derived uncharacterized protein YopW (111 aa).

This Bacillus subtilis (strain 168) protein is SPbeta prophage-derived uncharacterized protein YopW (yopW).